The primary structure comprises 304 residues: Pseudouridine-5'-phosphate glycosidase (304 aa).

Residue Glu25 is the Proton donor of the active site. 2 residues coordinate substrate: Lys88 and Val108. Asp140 contacts Mn(2+). Residue 142 to 144 participates in substrate binding; the sequence is SAD. Lys161 serves as the catalytic Nucleophile.

It belongs to the pseudouridine-5'-phosphate glycosidase family. In terms of assembly, homotrimer. Mn(2+) serves as cofactor.

The catalysed reaction is D-ribose 5-phosphate + uracil = psi-UMP + H2O. Its function is as follows. Catalyzes the reversible cleavage of pseudouridine 5'-phosphate (PsiMP) to ribose 5-phosphate and uracil. Functions biologically in the cleavage direction, as part of a pseudouridine degradation pathway. This is Pseudouridine-5'-phosphate glycosidase from Paracoccus denitrificans (strain Pd 1222).